Consider the following 690-residue polypeptide: Eukaryotic translation initiation factor 3 subunit B (690 aa).

Basic and acidic residues predominate over residues 1 to 11 (MAKKKSEEHSG). The interval 1 to 33 (MAKKKSEEHSGTDANDSDYQEEPNFDDPPGFVD) is disordered. Over residues 15-25 (NDSDYQEEPNF) the composition is skewed to acidic residues. Positions 57–141 (SVVVVDNIPK…HTFAVNLFTD (85 aa)) constitute an RRM domain. WD repeat units lie at residues 207–246 (TRERFTDTFVKWSPLGTYVVTFHKPGVAIWGGSSFQKIQK), 293–331 (DGMSVLSMFRWSHDDKFVARMGENSIHIYETPSFYLLDL), 334–369 (IKIPGIRGFSWSPTDNVIAYWVEEQNQIPARVTLME), 442–484 (EIRE…KPSL), and 530–575 (PDHF…IKRT). Positions 595–645 (EEKQKEIKKNLKKYYAAFEQKDRLRLTRASKELLEKRSQLRETFMEYRNKR) form a coiled coil.

The protein belongs to the eIF-3 subunit B family. As to quaternary structure, component of the eukaryotic translation initiation factor 3 (eIF-3) complex. The eIF-3 complex interacts with pix. Interacts with mxt.

Its subcellular location is the cytoplasm. In terms of biological role, RNA-binding component of the eukaryotic translation initiation factor 3 (eIF-3) complex, which is involved in protein synthesis of a specialized repertoire of mRNAs and, together with other initiation factors, stimulates binding of mRNA and methionyl-tRNAi to the 40S ribosome. The eIF-3 complex specifically targets and initiates translation of a subset of mRNAs involved in cell proliferation. In Drosophila melanogaster (Fruit fly), this protein is Eukaryotic translation initiation factor 3 subunit B.